Consider the following 398-residue polypeptide: Acetate kinase (398 aa).

A Mg(2+)-binding site is contributed by N10. K17 contributes to the ATP binding site. Residue R89 participates in substrate binding. Catalysis depends on D148, which acts as the Proton donor/acceptor. ATP contacts are provided by residues 208 to 212 (HLGNG), 283 to 285 (DCR), and 331 to 335 (GIGEN). E385 serves as a coordination point for Mg(2+).

This sequence belongs to the acetokinase family. Homodimer. The cofactor is Mg(2+). Mn(2+) serves as cofactor.

Its subcellular location is the cytoplasm. The enzyme catalyses acetate + ATP = acetyl phosphate + ADP. Its pathway is metabolic intermediate biosynthesis; acetyl-CoA biosynthesis; acetyl-CoA from acetate: step 1/2. Its function is as follows. Catalyzes the formation of acetyl phosphate from acetate and ATP. Can also catalyze the reverse reaction. This Histophilus somni (strain 129Pt) (Haemophilus somnus) protein is Acetate kinase.